The primary structure comprises 247 residues: Leucyl/phenylalanyl-tRNA--protein transferase (247 aa).

The protein belongs to the L/F-transferase family.

The protein resides in the cytoplasm. The catalysed reaction is N-terminal L-lysyl-[protein] + L-leucyl-tRNA(Leu) = N-terminal L-leucyl-L-lysyl-[protein] + tRNA(Leu) + H(+). The enzyme catalyses N-terminal L-arginyl-[protein] + L-leucyl-tRNA(Leu) = N-terminal L-leucyl-L-arginyl-[protein] + tRNA(Leu) + H(+). It carries out the reaction L-phenylalanyl-tRNA(Phe) + an N-terminal L-alpha-aminoacyl-[protein] = an N-terminal L-phenylalanyl-L-alpha-aminoacyl-[protein] + tRNA(Phe). Functionally, functions in the N-end rule pathway of protein degradation where it conjugates Leu, Phe and, less efficiently, Met from aminoacyl-tRNAs to the N-termini of proteins containing an N-terminal arginine or lysine. This Solidesulfovibrio magneticus (strain ATCC 700980 / DSM 13731 / RS-1) (Desulfovibrio magneticus) protein is Leucyl/phenylalanyl-tRNA--protein transferase.